A 429-amino-acid polypeptide reads, in one-letter code: Probable electron transfer flavoprotein-quinone oxidoreductase YdiS (429 aa).

Position 8 to 22 (8 to 22 (AIVVGAGVAGSVAAL)) interacts with FAD.

It belongs to the ETF-QO/FixC family. FAD is required as a cofactor.

Its function is as follows. Probably accepts electrons from YdiQ/YdiR and reduces a quinone. The polypeptide is Probable electron transfer flavoprotein-quinone oxidoreductase YdiS (ydiS) (Escherichia coli (strain K12)).